The following is a 277-amino-acid chain: Large ribosomal subunit protein uL2c (277 aa).

Positions 1–11 (MNTRSYSTFTP) are enriched in polar residues. Disordered regions lie at residues 1–47 (MNTR…RNNS) and 254–277 (YSAL…RRRK).

The protein belongs to the universal ribosomal protein uL2 family. As to quaternary structure, part of the 50S ribosomal subunit.

The protein localises to the plastid. Its subcellular location is the chloroplast. The protein is Large ribosomal subunit protein uL2c (rpl2) of Cryptomeria japonica (Japanese cedar).